The sequence spans 514 residues: NAD(P)H-quinone oxidoreductase subunit 2 (514 aa).

14 helical membrane passes run 16-36 (IWPE…DLIV), 43-63 (WLPY…YFEW), 80-100 (LSIV…LMSV), 110-130 (LAEF…LSGA), 133-153 (LVMI…MTGY), 168-188 (LLIG…LYGL), 211-231 (LGLA…ISAV), 245-265 (PTPV…ALAI), 279-299 (WHFI…VVAL), 307-327 (MLAY…TANS), 335-355 (IFYL…IILF), 379-399 (LGLS…GFFG), 411-431 (GLYG…YYYI), and 467-487 (VGLV…NPLF).

It belongs to the complex I subunit 2 family. NDH-1 can be composed of about 15 different subunits; different subcomplexes with different compositions have been identified which probably have different functions.

The protein resides in the cellular thylakoid membrane. It carries out the reaction a plastoquinone + NADH + (n+1) H(+)(in) = a plastoquinol + NAD(+) + n H(+)(out). The catalysed reaction is a plastoquinone + NADPH + (n+1) H(+)(in) = a plastoquinol + NADP(+) + n H(+)(out). Functionally, NDH-1 shuttles electrons from an unknown electron donor, via FMN and iron-sulfur (Fe-S) centers, to quinones in the respiratory and/or the photosynthetic chain. The immediate electron acceptor for the enzyme in this species is believed to be plastoquinone. Couples the redox reaction to proton translocation, and thus conserves the redox energy in a proton gradient. Cyanobacterial NDH-1 also plays a role in inorganic carbon-concentration. The sequence is that of NAD(P)H-quinone oxidoreductase subunit 2 from Gloeothece citriformis (strain PCC 7424) (Cyanothece sp. (strain PCC 7424)).